Reading from the N-terminus, the 236-residue chain is uncharacterized protein (236 aa).

The N-terminal stretch at 1 to 22 (MEFKMQKIILGMLVVTASNAMA) is a signal peptide.

This is an uncharacterized protein from Pasteurella multocida (strain Pm70).